The primary structure comprises 95 residues: Aspartyl/glutamyl-tRNA(Asn/Gln) amidotransferase subunit C (95 aa).

The protein belongs to the GatC family. Heterotrimer of A, B and C subunits.

The enzyme catalyses L-glutamyl-tRNA(Gln) + L-glutamine + ATP + H2O = L-glutaminyl-tRNA(Gln) + L-glutamate + ADP + phosphate + H(+). It carries out the reaction L-aspartyl-tRNA(Asn) + L-glutamine + ATP + H2O = L-asparaginyl-tRNA(Asn) + L-glutamate + ADP + phosphate + 2 H(+). Allows the formation of correctly charged Asn-tRNA(Asn) or Gln-tRNA(Gln) through the transamidation of misacylated Asp-tRNA(Asn) or Glu-tRNA(Gln) in organisms which lack either or both of asparaginyl-tRNA or glutaminyl-tRNA synthetases. The reaction takes place in the presence of glutamine and ATP through an activated phospho-Asp-tRNA(Asn) or phospho-Glu-tRNA(Gln). In Pseudomonas fluorescens (strain ATCC BAA-477 / NRRL B-23932 / Pf-5), this protein is Aspartyl/glutamyl-tRNA(Asn/Gln) amidotransferase subunit C.